Reading from the N-terminus, the 518-residue chain is Organic cation/carnitine transporter 3 (518 aa).

Residues 1–23 (MADSTRPLLSDFNSSESNLPPPR) are disordered. Residues 1–32 (MADSTRPLLSDFNSSESNLPPPRSLEETIERC) are Cytoplasmic-facing. The chain crosses the membrane as a helical span at residues 33–53 (IGDFGWAQFLQAALVSFAWFF). The Extracellular portion of the chain corresponds to 54-122 (DAQQTFITVF…LQCAGSFLKG (69 aa)). Residues Asn-83 and Asn-94 are each glycosylated (N-linked (GlcNAc...) asparagine). The helical transmembrane segment at 123–143 (FPASSFFLGCLIGGLALSTLA) threads the bilayer. Residues 144–157 (DSSLGRKNMLLLSC) are Cytoplasmic-facing. The helical transmembrane segment at 158–178 (LIMSLSSMLTAFSTSIWVYAF) threads the bilayer. Over 179–180 (LR) the chain is Extracellular. The chain crosses the membrane as a helical span at residues 181-197 (FLNGCGRATIGTCALVL). 198–205 (STELVGKK) contacts ATP. The Cytoplasmic portion of the chain corresponds to 198–210 (STELVGKKWRGQV). A helical membrane pass occupies residues 211-231 (GAMGFFCFTLGFLSLPMLGYI). At 232-239 (NEGNSWRN) the chain is on the extracellular side. The chain crosses the membrane as a helical span at residues 240–259 (LYVWTSIPTLIYCCLVRSFV). Topologically, residues 260–325 (RESPRWLIVK…LVRKSWSFRR (66 aa)) are cytoplasmic. Residues 326–346 (LLAAMVVGFGIGMVYYGMPLA) traverse the membrane as a helical segment. The Extracellular portion of the chain corresponds to 347–355 (LTNLNFNLY). A helical transmembrane segment spans residues 356 to 376 (LGVVFNALSEFPAFLITFFFI). Residues 377–383 (DKINRRD) lie on the Cytoplasmic side of the membrane. The helical transmembrane segment at 384–404 (ALIGFTALSGISSALIAVLGQ) threads the bilayer. Over 405–410 (QLGSLQ) the chain is Extracellular. Residues 411–431 (IVLELVSFFSACTAFNMTLIY) form a helical membrane-spanning segment. The Cytoplasmic segment spans residues 432-443 (TIEMFPTCVRNS). Residues 444 to 464 (AISMVRQALVFGGVFSPVMVA) form a helical membrane-spanning segment. Over 465-470 (AGRENQ) the chain is Extracellular. The helical transmembrane segment at 471-491 (FWSYGLFGLIIGLCGLFVFGL) threads the bilayer. Residues 492–518 (PETRGSVLCDTMDEEEYKTLAKRQFIG) lie on the Cytoplasmic side of the membrane.

The protein belongs to the major facilitator (TC 2.A.1) superfamily. Organic cation transporter (TC 2.A.1.19) family. As to expression, mostly expressed in siliques, mainly in young seeds. Present in stems (cortical cells and parenchyma cells), at the basis of secondary inflorescences, and at the base of trichomes.

The protein resides in the vacuole membrane. Its function is as follows. High affinity carnitine transporter involved in the active cellular uptake of carnitine. Also transports organic cations. In Arabidopsis thaliana (Mouse-ear cress), this protein is Organic cation/carnitine transporter 3 (OCT3).